The following is a 364-amino-acid chain: Melatonin receptor type 1B (364 aa).

The Extracellular segment spans residues 1–42 (MPENSSIPNCCEASGLAARPSWSGSAGARPPVTARAPWVAPM). A glycan (N-linked (GlcNAc...) asparagine) is linked at Asn-4. The helical transmembrane segment at 43-63 (LSTVVVVTTAVDFVGNLLVIL) threads the bilayer. The Cytoplasmic portion of the chain corresponds to 64–76 (SVLRNRKLRNAGN). Residues 77 to 97 (LFVVSLALADLVIALYPYPLI) traverse the membrane as a helical segment. Over 98 to 115 (LVAIIRDGWVLGEAHCKA) the chain is Extracellular. A disulfide bond links Cys-113 and Cys-190. The chain crosses the membrane as a helical span at residues 116–136 (SAFVMGLSVIGSVFNITAIAI). Over 137 to 155 (NRYCCICHSTTYHRVCSHW) the chain is Cytoplasmic. Residues 156–176 (YTPIYISLVWLLTLVALVPNF) traverse the membrane as a helical segment. The Extracellular portion of the chain corresponds to 177-200 (FVGSLEYDPRIYSCTFIQTASTQY). The chain crosses the membrane as a helical span at residues 201–221 (TAAVVAIHFLLPMAVVSFCYL). Residues 222 to 253 (RIWVLVLQARRKAKATRKLRLRPSDLRSFLTM) are Cytoplasmic-facing. Residues 254 to 274 (FAVFVVFAICWAPLNCIGLAV) traverse the membrane as a helical segment. Residues 275-287 (AINPEAMALQVPE) are Extracellular-facing. Residues 288-308 (GLFVTSYFLAYFNSCLNAIVY) form a helical membrane-spanning segment. The Cytoplasmic segment spans residues 309 to 364 (GLLNQNFRREYKRILLAIWNTRRCIQHASKHCLTEERQGPTPPAARATVPVKEGAL). The disordered stretch occupies residues 343-364 (EERQGPTPPAARATVPVKEGAL). Over residues 352 to 364 (AARATVPVKEGAL) the composition is skewed to low complexity.

The protein belongs to the G-protein coupled receptor 1 family.

The protein resides in the cell membrane. In terms of biological role, high affinity receptor for melatonin. The activity of this receptor is mediated by pertussis toxin sensitive G proteins that inhibits adenylate cyclase activity. This Mus musculus (Mouse) protein is Melatonin receptor type 1B (Mtnr1b).